Here is a 168-residue protein sequence, read N- to C-terminus: HTH-type transcriptional regulator IscR (168 aa).

The region spanning 2-131 (KLTSKGRYAV…NNITLGELMS (130 aa)) is the HTH rrf2-type domain. The H-T-H motif DNA-binding region spans 28 to 51 (LADISERQGISLSYLEQLFSKLRK). Residues cysteine 92, cysteine 98, and cysteine 104 each contribute to the [2Fe-2S] cluster site.

The cofactor is [2Fe-2S] cluster.

Functionally, regulates the transcription of several operons and genes involved in the biogenesis of Fe-S clusters and Fe-S-containing proteins. This is HTH-type transcriptional regulator IscR from Vibrio vulnificus (strain CMCP6).